The following is a 121-amino-acid chain: Large ribosomal subunit protein uL22 (121 aa).

The protein belongs to the universal ribosomal protein uL22 family. As to quaternary structure, part of the 50S ribosomal subunit.

This protein binds specifically to 23S rRNA; its binding is stimulated by other ribosomal proteins, e.g. L4, L17, and L20. It is important during the early stages of 50S assembly. It makes multiple contacts with different domains of the 23S rRNA in the assembled 50S subunit and ribosome. In terms of biological role, the globular domain of the protein is located near the polypeptide exit tunnel on the outside of the subunit, while an extended beta-hairpin is found that lines the wall of the exit tunnel in the center of the 70S ribosome. The polypeptide is Large ribosomal subunit protein uL22 (Hydrogenobaculum sp. (strain Y04AAS1)).